The sequence spans 179 residues: Large ribosomal subunit protein uL5 (179 aa).

The protein belongs to the universal ribosomal protein uL5 family. In terms of assembly, part of the 50S ribosomal subunit; part of the 5S rRNA/L5/L18/L25 subcomplex. Contacts the 5S rRNA and the P site tRNA. Forms a bridge to the 30S subunit in the 70S ribosome.

Functionally, this is one of the proteins that bind and probably mediate the attachment of the 5S RNA into the large ribosomal subunit, where it forms part of the central protuberance. In the 70S ribosome it contacts protein S13 of the 30S subunit (bridge B1b), connecting the 2 subunits; this bridge is implicated in subunit movement. Contacts the P site tRNA; the 5S rRNA and some of its associated proteins might help stabilize positioning of ribosome-bound tRNAs. The sequence is that of Large ribosomal subunit protein uL5 from Pseudomonas paraeruginosa (strain DSM 24068 / PA7) (Pseudomonas aeruginosa (strain PA7)).